Here is a 243-residue protein sequence, read N- to C-terminus: 3-deoxy-manno-octulosonate cytidylyltransferase (243 aa).

The protein belongs to the KdsB family.

The protein resides in the cytoplasm. The enzyme catalyses 3-deoxy-alpha-D-manno-oct-2-ulosonate + CTP = CMP-3-deoxy-beta-D-manno-octulosonate + diphosphate. Its pathway is nucleotide-sugar biosynthesis; CMP-3-deoxy-D-manno-octulosonate biosynthesis; CMP-3-deoxy-D-manno-octulosonate from 3-deoxy-D-manno-octulosonate and CTP: step 1/1. The protein operates within bacterial outer membrane biogenesis; lipopolysaccharide biosynthesis. In terms of biological role, activates KDO (a required 8-carbon sugar) for incorporation into bacterial lipopolysaccharide in Gram-negative bacteria. The chain is 3-deoxy-manno-octulosonate cytidylyltransferase from Helicobacter pylori (strain G27).